An 860-amino-acid polypeptide reads, in one-letter code: Endo-1,4-beta-xylanase B (860 aa).

Residues 1–20 form the signal peptide; that stretch reads MKFSSANKILFSGLVASANA. A GH10 domain is found at 21–324; sequence YDLLKDYAGD…KPVYNTLLNI (304 aa). Residue glutamate 144 is the Proton donor of the active site. The active-site Nucleophile is glutamate 255. An intrachain disulfide couples cysteine 278 to cysteine 284. N-linked (GlcNAc...) asparagine glycans are attached at residues asparagine 295, asparagine 309, asparagine 359, and asparagine 374. 2 stretches are compositionally biased toward polar residues: residues 330–362 and 371–418; these read RPASSSAKTLPGNSKSKTLPGVNSKTLPGNKSK and LPGN…NSKT. The tract at residues 330–793 is disordered; it reads RPASSSAKTL…TKTLPGGACK (464 aa). Repeat 1 spans residues 375-382; sequence KSKTLPGG. The tract at residues 375 to 782 is 47 X 8 AA tandem repeats of [SKN]-S-K-T-L-P-G-G; sequence KSKTLPGGNS…GGKSKTLPGG (408 aa). Asparagine 390 carries an N-linked (GlcNAc...) asparagine glycan. The stretch at 391-398 is repeat 2; the sequence is KSKTLPGG. Residue asparagine 406 is glycosylated (N-linked (GlcNAc...) asparagine). 45 tandem repeats follow at residues 415–422, 431–438, 439–446, 447–454, 455–462, 463–470, 471–478, 479–486, 487–494, 495–502, 503–510, 511–518, 519–526, 527–534, 535–542, 543–550, 551–558, 559–566, 567–574, 575–582, 583–590, 591–598, 599–606, 607–614, 615–622, 623–630, 631–638, 639–646, 647–654, 655–662, 663–670, 671–678, 679–686, 687–694, 695–702, 703–710, 711–718, 719–726, 727–734, 735–742, 743–750, 751–758, 759–766, 767–774, and 775–782. Composition is skewed to polar residues over residues 461–474 and 485–498; these read GGNSKTLPGGSSKT. 4 stretches are compositionally biased toward polar residues: residues 525-546, 557-570, 581-594, and 605-618; these read GGNSKTLPGGNSKTLPGGSSKT, GGNSKTLPGGSSKT, and GGNSKTLPGGNSKT. The segment covering 645–666 has biased composition (polar residues); sequence GGNSKTLPGGNSKTLPGGSSKT. Over residues 741-754 the composition is skewed to polar residues; sequence GGNSKTLPGGSSKT. The 37-residue stretch at 824–860 folds into the CBM1 domain; the sequence is NCAAKWGQCGGNGFNGPTCCQNGSRCQFVNEWYSQCL. Asparagine 845 carries N-linked (GlcNAc...) asparagine glycosylation.

The protein belongs to the glycosyl hydrolase 10 (cellulase F) family.

It localises to the secreted. It carries out the reaction Endohydrolysis of (1-&gt;4)-beta-D-xylosidic linkages in xylans.. It participates in glycan degradation; xylan degradation. Functionally, endo-1,4-beta-xylanase involved in the hydrolysis of xylan, a major structural heterogeneous polysaccharide found in plant biomass representing the second most abundant polysaccharide in the biosphere, after cellulose. Hydrolyzes both unsubstituted (oat spelts) and highly substituted (rye and wheat) forms of arabinoxylanslans. This is Endo-1,4-beta-xylanase B (xynB) from Neocallimastix patriciarum (Rumen fungus).